Reading from the N-terminus, the 215-residue chain is Ribonuclease T (215 aa).

Residues 20–194 (VVIDVETAGF…YDTERTAVLF (175 aa)) form the Exonuclease domain. Asp23, Glu25, His181, and Asp186 together coordinate Mg(2+). His181 serves as the catalytic Proton donor/acceptor.

Belongs to the RNase T family. Homodimer. It depends on Mg(2+) as a cofactor.

Functionally, trims short 3' overhangs of a variety of RNA species, leaving a one or two nucleotide 3' overhang. Responsible for the end-turnover of tRNA: specifically removes the terminal AMP residue from uncharged tRNA (tRNA-C-C-A). Also appears to be involved in tRNA biosynthesis. The polypeptide is Ribonuclease T (Salmonella choleraesuis (strain SC-B67)).